The sequence spans 269 residues: Putative phosphoenolpyruvate synthase regulatory protein (269 aa).

Position 149–156 (149–156 (GVSRSGKT)) interacts with ADP.

This sequence belongs to the pyruvate, phosphate/water dikinase regulatory protein family. PSRP subfamily.

The catalysed reaction is [pyruvate, water dikinase] + ADP = [pyruvate, water dikinase]-phosphate + AMP + H(+). It carries out the reaction [pyruvate, water dikinase]-phosphate + phosphate + H(+) = [pyruvate, water dikinase] + diphosphate. Functionally, bifunctional serine/threonine kinase and phosphorylase involved in the regulation of the phosphoenolpyruvate synthase (PEPS) by catalyzing its phosphorylation/dephosphorylation. The chain is Putative phosphoenolpyruvate synthase regulatory protein from Colwellia psychrerythraea (strain 34H / ATCC BAA-681) (Vibrio psychroerythus).